A 69-amino-acid chain; its full sequence is Cold shock protein CapB (69 aa).

Residues 7 to 66 (GTVKWFNDEKGFGFITPQSGDDLFVHFKAIQSDGFKSLKEGQQVSFIATRGQKGMQAEEV) enclose the CSD domain.

The protein resides in the cytoplasm. Its function is as follows. Affects cell viability at low temperatures. The chain is Cold shock protein CapB (capB) from Pseudomonas fragi.